A 249-amino-acid polypeptide reads, in one-letter code: Probable WRKY transcription factor 64 (249 aa).

A DNA-binding region (WRKY) is located at residues 97–165 (SPTPRPDDGF…YLGKHVCKAV (69 aa)).

It belongs to the WRKY group III family.

The protein resides in the nucleus. In terms of biological role, transcription factor. Interacts specifically with the W box (5'-(T)TGAC[CT]-3'), a frequently occurring elicitor-responsive cis-acting element. In Arabidopsis thaliana (Mouse-ear cress), this protein is Probable WRKY transcription factor 64 (WRKY64).